A 248-amino-acid polypeptide reads, in one-letter code: Myelin protein P0 (248 aa).

The N-terminal stretch at 1–29 is a signal peptide; that stretch reads MAPGAPSSSPSPILAALLFSSLVLSPTLA. In terms of domain architecture, Ig-like V-type spans 30–143; the sequence is IVVYTDREVY…DIVGKTSQVT (114 aa). Topologically, residues 30–153 are extracellular; the sequence is IVVYTDREVY…LYVFEKVPTR (124 aa). A disulfide bridge links Cys50 with Cys127. Asn122 carries N-linked (GlcNAc...) (complex) asparagine glycosylation. Residues 154-179 form a helical membrane-spanning segment; the sequence is YGVVLGAVIGGILGVVLLLLLLFYLI. Topologically, residues 180-248 are cytoplasmic; sequence RYCWLRRQAA…GLGESRKDKK (69 aa). Ser210 is subject to Phosphoserine; by PKC. The tract at residues 222-248 is disordered; it reads MLDHSRSTKAASEKKSKGLGESRKDKK. Basic and acidic residues predominate over residues 224–248; that stretch reads DHSRSTKAASEKKSKGLGESRKDKK. A phosphoserine mark is found at Ser226 and Ser228. Phosphoserine; by PKC is present on Ser233. A Phosphoserine modification is found at Ser237. Ser243 bears the Phosphoserine; by PKC mark.

The protein belongs to the myelin P0 protein family. In terms of assembly, homodimer and homotetramer. N-glycosylated; contains sulfate-substituted glycan. In terms of tissue distribution, found only in peripheral nervous system Schwann cells.

The protein localises to the cell membrane. Is an adhesion molecule necessary for normal myelination in the peripheral nervous system. It mediates adhesion between adjacent myelin wraps and ultimately drives myelin compaction. This chain is Myelin protein P0 (Mpz), found in Rattus norvegicus (Rat).